The chain runs to 411 residues: MKKRKGLLIILDGLGDRPIKEFGGKTPLEYAKTPNMDKLAKLGILGQQDPIKPGQPAGSDTAHLSIFGYDPYKVYRGRGFLEALGVGLDLDEDDLAFRVNFATIENGIITDRRAGRISTEEAHELAKAIQENVKLPVDFIFVGATGHRAVLVLKGMAKGYRVGENDPHEAGKPPHRFTWEDEESKRVAEILEEFVRQAHEVLERHPINEKRRKEGKPVANYLLIRGAGTYPDIPMKFTEQWKVRAGAVIAVSLVKGVARAIGFDVYTPEGATGEYNTDEMAKAKKTVELLKEYDFVFLHFKPTDAAGHDNNPKLKAEMIEKADRMIGYIIEHINLEDVVIAITGDHSTPCEVMNHSGDPVPLLIVGGGVRPDHTESFGERECMRGGLGRIRGHDIVPVMMDLMNRSEKFGA.

Belongs to the BPG-independent phosphoglycerate mutase family. A-PGAM subfamily.

The enzyme catalyses (2R)-2-phosphoglycerate = (2R)-3-phosphoglycerate. It functions in the pathway carbohydrate degradation; glycolysis; pyruvate from D-glyceraldehyde 3-phosphate: step 3/5. Catalyzes the interconversion of 2-phosphoglycerate and 3-phosphoglycerate. This Thermococcus gammatolerans (strain DSM 15229 / JCM 11827 / EJ3) protein is 2,3-bisphosphoglycerate-independent phosphoglycerate mutase.